We begin with the raw amino-acid sequence, 284 residues long: NADH-cytochrome b5 reductase 1 (284 aa).

The helical transmembrane segment at 8–28 (PLFVFSTIAIIISTFVIFYFV) threads the bilayer. Residues 41–144 (DTFQKFPLIE…RGPKGFFTYT (104 aa)) enclose the FAD-binding FR-type domain. FAD contacts are provided by residues 124-139 (DSKK…GPKG) and 150-182 (SFGM…KISL).

It belongs to the flavoprotein pyridine nucleotide cytochrome reductase family. As to quaternary structure, monomer. Component of the 2-(3-amino-3-carboxypropyl)histidine synthase complex composed of DPH1, DPH2, DPH3 and a NADH-dependent reductase, predominantly CBR1. Requires FAD as cofactor.

It localises to the mitochondrion outer membrane. It carries out the reaction 2 Fe(III)-[cytochrome b5] + NADH = 2 Fe(II)-[cytochrome b5] + NAD(+) + H(+). The enzyme catalyses 2 Fe(3+)-[Dph3] + NADH = 2 Fe(2+)-[Dph3] + NAD(+) + H(+). It functions in the pathway protein modification; peptidyl-diphthamide biosynthesis. Functionally, NADH-dependent reductase for DPH3 and cytochrome b5. Required for the first step of diphthamide biosynthesis, a post-translational modification of histidine which occurs in elongation factor 2. DPH1 and DPH2 transfer a 3-amino-3-carboxypropyl (ACP) group from S-adenosyl-L-methionine (SAM) to a histidine residue, the reaction is assisted by a reduction system comprising DPH3 and a NADH-dependent reductase, predominantly CBR1. By reducing DPH3, also involved in the formation of the tRNA wobble base modification mcm5s 2U (5-methoxycarbonylmethyl-2-thiouridine), mediated by the elongator complex. The cytochrome b5/NADH cytochrome b5 reductase electron transfer system supports the catalytic activity of several sterol biosynthetic enzymes. In Scheffersomyces stipitis (strain ATCC 58785 / CBS 6054 / NBRC 10063 / NRRL Y-11545) (Yeast), this protein is NADH-cytochrome b5 reductase 1 (CBR1).